Here is a 145-residue protein sequence, read N- to C-terminus: Transmembrane protein CCDC163 (145 aa).

A helical membrane pass occupies residues 38-54 (LIGLCICFFCSSGCIFL).

It localises to the membrane. The chain is Transmembrane protein CCDC163 from Homo sapiens (Human).